A 191-amino-acid polypeptide reads, in one-letter code: Fe/S biogenesis protein NfuA (191 aa).

Residues Cys149 and Cys152 each contribute to the [4Fe-4S] cluster site.

This sequence belongs to the NfuA family. Homodimer. The cofactor is [4Fe-4S] cluster.

Its function is as follows. Involved in iron-sulfur cluster biogenesis. Binds a 4Fe-4S cluster, can transfer this cluster to apoproteins, and thereby intervenes in the maturation of Fe/S proteins. Could also act as a scaffold/chaperone for damaged Fe/S proteins. This is Fe/S biogenesis protein NfuA from Pectobacterium atrosepticum (strain SCRI 1043 / ATCC BAA-672) (Erwinia carotovora subsp. atroseptica).